The sequence spans 276 residues: 2-dehydro-3-deoxyphosphooctonate aldolase (276 aa).

The protein belongs to the KdsA family.

It is found in the cytoplasm. It catalyses the reaction D-arabinose 5-phosphate + phosphoenolpyruvate + H2O = 3-deoxy-alpha-D-manno-2-octulosonate-8-phosphate + phosphate. Its pathway is carbohydrate biosynthesis; 3-deoxy-D-manno-octulosonate biosynthesis; 3-deoxy-D-manno-octulosonate from D-ribulose 5-phosphate: step 2/3. The protein operates within bacterial outer membrane biogenesis; lipopolysaccharide biosynthesis. The polypeptide is 2-dehydro-3-deoxyphosphooctonate aldolase (Helicobacter acinonychis (strain Sheeba)).